The following is a 338-amino-acid chain: Putative transposase for insertion sequence element IS4SA (338 aa).

This sequence belongs to the transposase 11 family.

The chain is Putative transposase for insertion sequence element IS4SA from Synechocystis sp. (strain ATCC 27184 / PCC 6803 / Kazusa).